We begin with the raw amino-acid sequence, 419 residues long: MSRYLFSSESVTEGHPDKICDQISDTILDALLTQDPRSRVAAEVVVNTGMVVVTGEITTTANVNFTKLVRDKIREIGYTEADNGFSADSCAVFLALDEQSPEIAQGVSCALEVRTSEEDALDRIGAGDQGLMFGFACTETPELMPLPISVAHRLTRRLAQVRKDGTLAYLKPDGKAQVTVEYERKDGVDRPGRIDTILISTQHAAVIDDLSDNDAVQARIKADLQTHVIGPVFADLDIRPDAQTRLLVNPSGRFVIGGPQGDSGLTGRKIIVDTYGGYARHGGGAFSGKDPTKVDRSAAYAARYVAKNIVAAELADRCEVQVAYAIGVARPVSIFVETFGTGRVSDEALMLLVREHFDLRPAAILRDFDLCRLPAQRGGRFYQDVAAYGHLGRPDLDLPWEHTDKAATLKQAIQTAAAV.

Residue His15 coordinates ATP. Residue Asp17 coordinates Mg(2+). Glu43 is a K(+) binding site. Residues Glu56 and Gln99 each coordinate L-methionine. The tract at residues 99–109 (QSPEIAQGVSC) is flexible loop. ATP contacts are provided by residues 173 to 175 (DGK), 253 to 254 (RF), Asp262, 268 to 269 (RK), Ala285, and Lys289. Asp262 contacts L-methionine. Lys293 provides a ligand contact to L-methionine.

It belongs to the AdoMet synthase family. Homotetramer; dimer of dimers. Requires Mg(2+) as cofactor. The cofactor is K(+).

It is found in the cytoplasm. It catalyses the reaction L-methionine + ATP + H2O = S-adenosyl-L-methionine + phosphate + diphosphate. The protein operates within amino-acid biosynthesis; S-adenosyl-L-methionine biosynthesis; S-adenosyl-L-methionine from L-methionine: step 1/1. Its function is as follows. Catalyzes the formation of S-adenosylmethionine (AdoMet) from methionine and ATP. The overall synthetic reaction is composed of two sequential steps, AdoMet formation and the subsequent tripolyphosphate hydrolysis which occurs prior to release of AdoMet from the enzyme. The protein is S-adenosylmethionine synthase of Gloeobacter violaceus (strain ATCC 29082 / PCC 7421).